Reading from the N-terminus, the 117-residue chain is MEFGLSWVFLVALLRGVQCQVQLVESGGGVVQPGRSLRLSCAASGFTFSSYAMHWVRQAPGKGLEWVAVISYDGSNKYYADSVKGRFTISRDNSKNTLYLQMNSLRAEDTAVYYCAR.

Residues 1–19 (MEFGLSWVFLVALLRGVQC) form the signal peptide. Gln20 bears the Pyrrolidone carboxylic acid mark. Residues 20-44 (QVQLVESGGGVVQPGRSLRLSCAAS) form a framework-1 region. An Ig-like domain is found at 20–117 (QVQLVESGGG…EDTAVYYCAR (98 aa)). Cys41 and Cys115 are disulfide-bonded. Residues 45-52 (GFTFSSYA) are complementarity-determining-1. The segment at 53 to 69 (MHWVRQAPGKGLEWVAV) is framework-2. The interval 70-77 (ISYDGSNK) is complementarity-determining-2. The tract at residues 78-115 (YYADSVKGRFTISRDNSKNTLYLQMNSLRAEDTAVYYC) is framework-3. The interval 116–117 (AR) is complementarity-determining-3.

Immunoglobulins are composed of two identical heavy chains and two identical light chains; disulfide-linked.

The protein localises to the secreted. It is found in the cell membrane. Functionally, v region of the variable domain of immunoglobulin heavy chains that participates in the antigen recognition. Immunoglobulins, also known as antibodies, are membrane-bound or secreted glycoproteins produced by B lymphocytes. In the recognition phase of humoral immunity, the membrane-bound immunoglobulins serve as receptors which, upon binding of a specific antigen, trigger the clonal expansion and differentiation of B lymphocytes into immunoglobulins-secreting plasma cells. Secreted immunoglobulins mediate the effector phase of humoral immunity, which results in the elimination of bound antigens. The antigen binding site is formed by the variable domain of one heavy chain, together with that of its associated light chain. Thus, each immunoglobulin has two antigen binding sites with remarkable affinity for a particular antigen. The variable domains are assembled by a process called V-(D)-J rearrangement and can then be subjected to somatic hypermutations which, after exposure to antigen and selection, allow affinity maturation for a particular antigen. The polypeptide is Immunoglobulin heavy variable 3-30-3 (Homo sapiens (Human)).